A 420-amino-acid chain; its full sequence is L-rhamnose isomerase (420 aa).

Mn(2+) contacts are provided by histidine 264, aspartate 296, and aspartate 298.

The protein belongs to the rhamnose isomerase family. Mn(2+) serves as cofactor.

The protein resides in the cytoplasm. The enzyme catalyses L-rhamnopyranose = L-rhamnulose. Its pathway is carbohydrate degradation; L-rhamnose degradation; glycerone phosphate from L-rhamnose: step 1/3. Its function is as follows. Catalyzes the interconversion of L-rhamnose and L-rhamnulose. In Listeria innocua serovar 6a (strain ATCC BAA-680 / CLIP 11262), this protein is L-rhamnose isomerase.